We begin with the raw amino-acid sequence, 553 residues long: Solute carrier family 45 member 3 (553 aa).

11 helical membrane passes run 19–39 (LLVN…ITYV), 52–72 (FMTM…PLLG), 88–108 (FIWA…RAGW), 120–140 (LELA…QVCF), 161–181 (YSVY…LPAI), 198–218 (CLFG…LLVA), 275–295 (FVAE…YTDF), 323–343 (MGSL…LVMD), 353–373 (AVYL…CLSH), 382–402 (AALT…LASL), and 522–542 (AYMV…TQVV).

It belongs to the glycoside-pentoside-hexuronide (GPH) cation symporter transporter (TC 2.A.2) family. Prostate specific. Expressed in all prostatic glandular cells. Expressed both in normal and cancerous prostates.

It localises to the membrane. The enzyme catalyses sucrose(out) + H(+)(out) = sucrose(in) + H(+)(in). Functionally, proton-associated sucrose transporter. May be able to transport also glucose and fructose. The sequence is that of Solute carrier family 45 member 3 from Homo sapiens (Human).